The sequence spans 346 residues: Sensor protein kinase GraS (346 aa).

A run of 2 helical transmembrane segments spans residues 15–35 (MNWIFWILFLNLLMLGISLID) and 43–63 (LFYIVSLNLSLTMIFLILTYF). In terms of domain architecture, Histidine kinase spans 126 to 332 (EFVHDIKTPV…TVRLIFPLQN (207 aa)).

In terms of assembly, interacts with GraX.

The protein resides in the cell membrane. The catalysed reaction is ATP + protein L-histidine = ADP + protein N-phospho-L-histidine.. Functionally, member of the two-component regulatory system GraR/GraS involved in resistance against cationic antimicrobial peptides (CAMPs). Functions as a sensor protein kinase which phosphorylates GraR through the auxiliary protein GraX. In turn, GraR up-regulates many genes such as adhesins, exoproteins, transporters, toxins, and proteins involved in cell wall synthesis. Down-regulates the expression of many genes involved in RNA and amino acid synthesis or glycolysis. This chain is Sensor protein kinase GraS (graS), found in Staphylococcus aureus (strain MSSA476).